A 510-amino-acid chain; its full sequence is NAD(P)H-quinone oxidoreductase subunit 2, chloroplastic (510 aa).

Transmembrane regions (helical) follow at residues leucine 24–leucine 44, tryptophan 59–tryptophan 79, isoleucine 99–isoleucine 119, methionine 124–cysteine 144, leucine 149–tyrosine 169, tyrosine 183–glycine 203, isoleucine 229–phenylalanine 249, tryptophan 295–isoleucine 315, methionine 323–aspartate 343, glycine 347–alanine 367, alanine 395–phenylalanine 415, and leucine 418–leucine 438.

Belongs to the complex I subunit 2 family. In terms of assembly, NDH is composed of at least 16 different subunits, 5 of which are encoded in the nucleus.

Its subcellular location is the plastid. It is found in the chloroplast thylakoid membrane. The enzyme catalyses a plastoquinone + NADH + (n+1) H(+)(in) = a plastoquinol + NAD(+) + n H(+)(out). It carries out the reaction a plastoquinone + NADPH + (n+1) H(+)(in) = a plastoquinol + NADP(+) + n H(+)(out). Its function is as follows. NDH shuttles electrons from NAD(P)H:plastoquinone, via FMN and iron-sulfur (Fe-S) centers, to quinones in the photosynthetic chain and possibly in a chloroplast respiratory chain. The immediate electron acceptor for the enzyme in this species is believed to be plastoquinone. Couples the redox reaction to proton translocation, and thus conserves the redox energy in a proton gradient. This Allium textile (Textile onion) protein is NAD(P)H-quinone oxidoreductase subunit 2, chloroplastic.